We begin with the raw amino-acid sequence, 150 residues long: 3-hydroxyacyl-[acyl-carrier-protein] dehydratase FabZ (150 aa).

The active site involves H54.

The protein belongs to the thioester dehydratase family. FabZ subfamily.

It localises to the cytoplasm. It catalyses the reaction a (3R)-hydroxyacyl-[ACP] = a (2E)-enoyl-[ACP] + H2O. Its function is as follows. Involved in unsaturated fatty acids biosynthesis. Catalyzes the dehydration of short chain beta-hydroxyacyl-ACPs and long chain saturated and unsaturated beta-hydroxyacyl-ACPs. In Aliivibrio fischeri (strain ATCC 700601 / ES114) (Vibrio fischeri), this protein is 3-hydroxyacyl-[acyl-carrier-protein] dehydratase FabZ.